Consider the following 96-residue polypeptide: UPF0298 protein LCA_1075 (96 aa).

It belongs to the UPF0298 family.

The protein resides in the cytoplasm. The chain is UPF0298 protein LCA_1075 from Latilactobacillus sakei subsp. sakei (strain 23K) (Lactobacillus sakei subsp. sakei).